A 442-amino-acid chain; its full sequence is Protoheme IX farnesyltransferase (442 aa).

The unknown stretch occupies residues 1–167; sequence MGVYSLLVLG…AYVQLMKPRL (167 aa). A run of 11 helical transmembrane segments spans residues 49 to 69, 76 to 96, 106 to 126, 167 to 187, 194 to 214, 245 to 265, 267 to 287, 308 to 328, 365 to 385, 386 to 406, and 421 to 441; these read AAALTGLAVVGAAVLAWRTGA, AVTLALALYPVQVVIGAYTAM, VHLTLGVGIFASLVVALAWTL, LMWLLCLVAGAGMALASSQLG, AATVVLTLGGGVLSIGASGTF, LAFGVVLGVASLAAFAAVNLL, AVLGLTAIAFYSIVYTLVLKP, WVAVTGAVGVGGVVLAGVIFL, HIVYYIGATLASAVVLAELTG, LGPLYAATTVLLGAVFLYFAI, and FHASNAYLGCLLVAVVLDTMV. The prenyltransferase stretch occupies residues 168–439; that stretch reads MWLLCLVAGA…CLLVAVVLDT (272 aa).

In the C-terminal section; belongs to the UbiA prenyltransferase family. Protoheme IX farnesyltransferase subfamily.

It is found in the cell membrane. The enzyme catalyses heme b + (2E,6E)-farnesyl diphosphate + H2O = Fe(II)-heme o + diphosphate. It functions in the pathway porphyrin-containing compound metabolism; heme O biosynthesis; heme O from protoheme: step 1/1. Converts heme B (protoheme IX) to heme O by substitution of the vinyl group on carbon 2 of heme B porphyrin ring with a hydroxyethyl farnesyl side group. This Halobacterium salinarum (strain ATCC 700922 / JCM 11081 / NRC-1) (Halobacterium halobium) protein is Protoheme IX farnesyltransferase (ctaB).